Reading from the N-terminus, the 309-residue chain is Type II methyltransferase M.HgiDI (309 aa).

The SAM-dependent MTase C5-type domain occupies 1–297 (MKTIDLFAGC…TSLQAYLNQP (297 aa)). Cysteine 75 is an active-site residue.

It belongs to the class I-like SAM-binding methyltransferase superfamily. C5-methyltransferase family.

The catalysed reaction is a 2'-deoxycytidine in DNA + S-adenosyl-L-methionine = a 5-methyl-2'-deoxycytidine in DNA + S-adenosyl-L-homocysteine + H(+). In terms of biological role, a methylase that recognizes the double-stranded sequence 5'-GRCGYC-3', methylates C-? on both strands, and protects the DNA from cleavage by the HgiDI endonuclease. The protein is Type II methyltransferase M.HgiDI of Herpetosiphon aurantiacus (Herpetosiphon giganteus).